A 349-amino-acid polypeptide reads, in one-letter code: Glycerol-3-phosphate dehydrogenase [NAD(+)], cytoplasmic (349 aa).

10 to 15 serves as a coordination point for NAD(+); it reads GSGNWG. Residue K120 coordinates substrate. A153 contacts NAD(+). A Phosphoserine modification is found at S154. The Proton acceptor role is filled by K204. NAD(+) is bound at residue R269. 269 to 270 contacts substrate; that stretch reads RN. The residue at position 289 (K289) is an N6-succinyllysine. The NAD(+) site is built by K296 and Q298. Y326 is subject to Phosphotyrosine.

It belongs to the NAD-dependent glycerol-3-phosphate dehydrogenase family. As to quaternary structure, homodimer.

It is found in the cytoplasm. The enzyme catalyses sn-glycerol 3-phosphate + NAD(+) = dihydroxyacetone phosphate + NADH + H(+). Functionally, has glycerol-3-phosphate dehydrogenase activity. This is Glycerol-3-phosphate dehydrogenase [NAD(+)], cytoplasmic from Mus musculus (Mouse).